A 155-amino-acid chain; its full sequence is Ribosomal RNA large subunit methyltransferase H (155 aa).

Residues Leu-72, Gly-103, and 122-127 (LSPLTL) each bind S-adenosyl-L-methionine.

It belongs to the RNA methyltransferase RlmH family. As to quaternary structure, homodimer.

The protein resides in the cytoplasm. It carries out the reaction pseudouridine(1915) in 23S rRNA + S-adenosyl-L-methionine = N(3)-methylpseudouridine(1915) in 23S rRNA + S-adenosyl-L-homocysteine + H(+). Functionally, specifically methylates the pseudouridine at position 1915 (m3Psi1915) in 23S rRNA. This is Ribosomal RNA large subunit methyltransferase H from Pasteurella multocida (strain Pm70).